Here is a 556-residue protein sequence, read N- to C-terminus: Phenylalanine--tRNA ligase beta subunit (556 aa).

The 77-residue stretch at 269-345 (MEPEEVVYDV…MGYGYERIEP (77 aa)) folds into the B5 domain. Mg(2+) contacts are provided by aspartate 323, aspartate 329, glutamate 332, and glutamate 333.

This sequence belongs to the phenylalanyl-tRNA synthetase beta subunit family. Type 2 subfamily. Tetramer of two alpha and two beta subunits. Mg(2+) is required as a cofactor.

It is found in the cytoplasm. It catalyses the reaction tRNA(Phe) + L-phenylalanine + ATP = L-phenylalanyl-tRNA(Phe) + AMP + diphosphate + H(+). This chain is Phenylalanine--tRNA ligase beta subunit, found in Thermofilum pendens (strain DSM 2475 / Hrk 5).